The following is a 339-amino-acid chain: Serpentine receptor class delta-19 (339 aa).

7 helical membrane-spanning segments follow: residues 2–22 (IIFF…LNLL), 39–59 (ATLI…DLFI), 90–110 (VGLS…LISF), 130–150 (ITIM…TLFV), 187–207 (VYAV…IFVL), 242–262 (IIPM…SGLL), and 270–290 (SIFS…LYFV).

It belongs to the nematode receptor-like protein srd family.

Its subcellular location is the membrane. This is Serpentine receptor class delta-19 (srd-19) from Caenorhabditis elegans.